We begin with the raw amino-acid sequence, 144 residues long: Large ribosomal subunit protein uL13 (144 aa).

This sequence belongs to the universal ribosomal protein uL13 family. Part of the 50S ribosomal subunit.

Functionally, this protein is one of the early assembly proteins of the 50S ribosomal subunit, although it is not seen to bind rRNA by itself. It is important during the early stages of 50S assembly. In Mesomycoplasma hyopneumoniae (strain 7448) (Mycoplasma hyopneumoniae), this protein is Large ribosomal subunit protein uL13.